A 423-amino-acid chain; its full sequence is Adenylosuccinate synthetase (423 aa).

GTP is bound by residues 12 to 18 and 40 to 42; these read GDEGKGK and GHT. Aspartate 13 acts as the Proton acceptor in catalysis. Residues aspartate 13 and glycine 40 each contribute to the Mg(2+) site. IMP-binding positions include 13–16, 38–41, threonine 129, arginine 143, glutamine 224, threonine 239, and arginine 303; these read DEGK and NAGH. The active-site Proton donor is the histidine 41. Residue 299 to 305 participates in substrate binding; that stretch reads SVTGRQR. GTP is bound by residues arginine 305, 331–333, and 412–414; these read KGD and SVG.

The protein belongs to the adenylosuccinate synthetase family. As to quaternary structure, homodimer. The cofactor is Mg(2+).

Its subcellular location is the cytoplasm. It carries out the reaction IMP + L-aspartate + GTP = N(6)-(1,2-dicarboxyethyl)-AMP + GDP + phosphate + 2 H(+). It functions in the pathway purine metabolism; AMP biosynthesis via de novo pathway; AMP from IMP: step 1/2. Functionally, plays an important role in the de novo pathway of purine nucleotide biosynthesis. Catalyzes the first committed step in the biosynthesis of AMP from IMP. The chain is Adenylosuccinate synthetase from Flavobacterium psychrophilum (strain ATCC 49511 / DSM 21280 / CIP 103535 / JIP02/86).